We begin with the raw amino-acid sequence, 85 residues long: Small ribosomal subunit protein uS17 (85 aa).

It belongs to the universal ribosomal protein uS17 family. Part of the 30S ribosomal subunit.

Functionally, one of the primary rRNA binding proteins, it binds specifically to the 5'-end of 16S ribosomal RNA. This is Small ribosomal subunit protein uS17 from Spiroplasma citri.